A 322-amino-acid chain; its full sequence is 4-hydroxy-3-methylbut-2-enyl diphosphate reductase (322 aa).

Cys-12 is a [4Fe-4S] cluster binding site. (2E)-4-hydroxy-3-methylbut-2-enyl diphosphate-binding residues include His-43 and His-81. His-43 and His-81 together coordinate dimethylallyl diphosphate. Positions 43 and 81 each coordinate isopentenyl diphosphate. Residue Cys-103 coordinates [4Fe-4S] cluster. His-131 contacts (2E)-4-hydroxy-3-methylbut-2-enyl diphosphate. Position 131 (His-131) interacts with dimethylallyl diphosphate. Isopentenyl diphosphate is bound at residue His-131. The active-site Proton donor is Glu-133. Thr-172 provides a ligand contact to (2E)-4-hydroxy-3-methylbut-2-enyl diphosphate. Cys-200 is a binding site for [4Fe-4S] cluster. Residues Ser-228, Asn-230, and Ser-273 each coordinate (2E)-4-hydroxy-3-methylbut-2-enyl diphosphate. Ser-228, Asn-230, and Ser-273 together coordinate dimethylallyl diphosphate. Isopentenyl diphosphate contacts are provided by Ser-228, Asn-230, and Ser-273.

This sequence belongs to the IspH family. [4Fe-4S] cluster is required as a cofactor.

It catalyses the reaction isopentenyl diphosphate + 2 oxidized [2Fe-2S]-[ferredoxin] + H2O = (2E)-4-hydroxy-3-methylbut-2-enyl diphosphate + 2 reduced [2Fe-2S]-[ferredoxin] + 2 H(+). It carries out the reaction dimethylallyl diphosphate + 2 oxidized [2Fe-2S]-[ferredoxin] + H2O = (2E)-4-hydroxy-3-methylbut-2-enyl diphosphate + 2 reduced [2Fe-2S]-[ferredoxin] + 2 H(+). The protein operates within isoprenoid biosynthesis; dimethylallyl diphosphate biosynthesis; dimethylallyl diphosphate from (2E)-4-hydroxy-3-methylbutenyl diphosphate: step 1/1. It participates in isoprenoid biosynthesis; isopentenyl diphosphate biosynthesis via DXP pathway; isopentenyl diphosphate from 1-deoxy-D-xylulose 5-phosphate: step 6/6. Functionally, catalyzes the conversion of 1-hydroxy-2-methyl-2-(E)-butenyl 4-diphosphate (HMBPP) into a mixture of isopentenyl diphosphate (IPP) and dimethylallyl diphosphate (DMAPP). Acts in the terminal step of the DOXP/MEP pathway for isoprenoid precursor biosynthesis. The polypeptide is 4-hydroxy-3-methylbut-2-enyl diphosphate reductase (Macrococcus caseolyticus (strain JCSC5402) (Macrococcoides caseolyticum)).